The primary structure comprises 277 residues: F420-dependent methylenetetrahydromethanopterin dehydrogenase (277 aa).

Belongs to the MTD family.

It carries out the reaction 5,10-methylenetetrahydromethanopterin + oxidized coenzyme F420-(gamma-L-Glu)(n) + 2 H(+) = 5,10-methenyl-5,6,7,8-tetrahydromethanopterin + reduced coenzyme F420-(gamma-L-Glu)(n). It participates in one-carbon metabolism; methanogenesis from CO(2); 5,10-methylene-5,6,7,8-tetrahydromethanopterin from 5,10-methenyl-5,6,7,8-tetrahydromethanopterin (coenzyme F420 route): step 1/1. In terms of biological role, catalyzes the reversible reduction of methenyl-H(4)MPT(+) to methylene-H(4)MPT. This chain is F420-dependent methylenetetrahydromethanopterin dehydrogenase, found in Methanococcus maripaludis (strain DSM 14266 / JCM 13030 / NBRC 101832 / S2 / LL).